Reading from the N-terminus, the 232-residue chain is Malate dehydrogenase (232 aa).

Asp-4 lines the NAD(+) pocket. Substrate contacts are provided by Arg-51 and Arg-57. Residues Asn-64 and 87–89 (ITN) contribute to the NAD(+) site. Positions 89 and 123 each coordinate substrate. His-147 functions as the Proton acceptor in the catalytic mechanism. An NAD(+)-binding site is contributed by Met-197.

This sequence belongs to the LDH/MDH superfamily. MDH type 1 family. As to quaternary structure, homodimer.

It catalyses the reaction (S)-malate + NAD(+) = oxaloacetate + NADH + H(+). Its function is as follows. Catalyzes the reversible oxidation of malate to oxaloacetate. This is Malate dehydrogenase (mdh) from Klebsiella variicola.